The sequence spans 66 residues: Large ribosomal subunit protein bL35 (66 aa).

This sequence belongs to the bacterial ribosomal protein bL35 family.

This is Large ribosomal subunit protein bL35 from Neorickettsia sennetsu (strain ATCC VR-367 / Miyayama) (Ehrlichia sennetsu).